Here is a 127-residue protein sequence, read N- to C-terminus: UPF0102 protein Glov_2230 (127 aa).

It belongs to the UPF0102 family.

The polypeptide is UPF0102 protein Glov_2230 (Trichlorobacter lovleyi (strain ATCC BAA-1151 / DSM 17278 / SZ) (Geobacter lovleyi)).